The following is a 252-amino-acid chain: tRNA1(Val) (adenine(37)-N6)-methyltransferase (252 aa).

Belongs to the methyltransferase superfamily. tRNA (adenine-N(6)-)-methyltransferase family.

It is found in the cytoplasm. The catalysed reaction is adenosine(37) in tRNA1(Val) + S-adenosyl-L-methionine = N(6)-methyladenosine(37) in tRNA1(Val) + S-adenosyl-L-homocysteine + H(+). Its function is as follows. Specifically methylates the adenine in position 37 of tRNA(1)(Val) (anticodon cmo5UAC). The protein is tRNA1(Val) (adenine(37)-N6)-methyltransferase of Yersinia pseudotuberculosis serotype IB (strain PB1/+).